A 494-amino-acid polypeptide reads, in one-letter code: Cytochrome P450 2A7 (494 aa).

C439 serves as a coordination point for heme.

It belongs to the cytochrome P450 family. Heme serves as cofactor.

The protein localises to the endoplasmic reticulum membrane. Its subcellular location is the microsome membrane. The enzyme catalyses an organic molecule + reduced [NADPH--hemoprotein reductase] + O2 = an alcohol + oxidized [NADPH--hemoprotein reductase] + H2O + H(+). Cytochromes P450 are a group of heme-thiolate monooxygenases. In liver microsomes, this enzyme is involved in an NADPH-dependent electron transport pathway. It oxidizes a variety of structurally unrelated compounds, including steroids, fatty acids, and xenobiotics. This is Cytochrome P450 2A7 (CYP2A7) from Homo sapiens (Human).